Here is an 834-residue protein sequence, read N- to C-terminus: Ras GTPase-activating protein 3 (834 aa).

C2 domains lie at Met-1–Phe-112 and Val-123–Tyr-263. The residue at position 2 (Ala-2) is an N-acetylalanine. A Phosphotyrosine modification is found at Tyr-66. Phosphoserine is present on Ser-77. Thr-110 carries the phosphothreonine modification. One can recognise a Ras-GAP domain in the interval Gly-346 to Ile-561. Residues Ile-576–Gln-677 enclose the PH domain. Residues Asn-679–Gly-715 form a Btk-type zinc finger. His-687, Cys-698, Cys-699, and Cys-709 together coordinate Zn(2+). Ser-809 and Ser-833 each carry phosphoserine.

In terms of tissue distribution, high levels in brain, lower in spleen and lung.

Functionally, inhibitory regulator of the Ras-cyclic AMP pathway. May bind inositol tetrakisphosphate (IP4). The polypeptide is Ras GTPase-activating protein 3 (Rasa3) (Mus musculus (Mouse)).